The sequence spans 256 residues: Protein FixA (256 aa).

Belongs to the ETF beta-subunit/FixA family. Heterodimer of FixA and FixB.

Its pathway is amine and polyamine metabolism; carnitine metabolism. In terms of biological role, required for anaerobic carnitine reduction. May bring reductant to CaiA. This Escherichia coli O17:K52:H18 (strain UMN026 / ExPEC) protein is Protein FixA.